A 513-amino-acid chain; its full sequence is Pantetheinase (513 aa).

Positions 1–21 (MTTQLPAYVAILLFYVSRASC) are cleaved as a signal peptide. Asn38 carries N-linked (GlcNAc...) asparagine glycosylation. The CN hydrolase domain maps to 39–306 (ATLTPVSREE…GKLLLSQLDS (268 aa)). Glu79 (proton acceptor) is an active-site residue. N-linked (GlcNAc...) asparagine glycosylation is present at Asn130. The active-site Proton donor is the Lys178. N-linked (GlcNAc...) asparagine glycosylation is present at Asn200. The active-site Nucleophile is Cys211. Asn283, Asn315, and Asn353 each carry an N-linked (GlcNAc...) asparagine glycan. The GPI-anchor amidated glycine moiety is linked to residue Gly491. Positions 492-513 (LTAQARIIMLIVIAPIVCSLSW) are cleaved as a propeptide — removed in mature form.

This sequence belongs to the carbon-nitrogen hydrolase superfamily. BTD/VNN family. As to quaternary structure, monomer. In terms of tissue distribution, widely expressed with higher expression in spleen, kidney and blood. Overexpressed in lesional psoriatic skin.

The protein resides in the cell membrane. The catalysed reaction is (R)-pantetheine + H2O = cysteamine + (R)-pantothenate. Its function is as follows. Amidohydrolase that hydrolyzes specifically one of the carboamide linkages in D-pantetheine thus recycling pantothenic acid (vitamin B5) and releasing cysteamine. This is Pantetheinase (VNN1) from Homo sapiens (Human).